Consider the following 102-residue polypeptide: Large ribosomal subunit protein uL24c (102 aa).

It belongs to the universal ribosomal protein uL24 family. Part of the 50S ribosomal subunit.

The protein resides in the plastid. The protein localises to the chloroplast. One of two assembly initiator proteins, it binds directly to the 5'-end of the 23S rRNA, where it nucleates assembly of the 50S subunit. The sequence is that of Large ribosomal subunit protein uL24c (rpl24) from Rhodomonas salina (Cryptomonas salina).